A 145-amino-acid polypeptide reads, in one-letter code: Transmembrane protein CCDC163 (145 aa).

Residues 38 to 54 form a helical membrane-spanning segment; it reads LIGLCICFFCSSGCIFL.

It is found in the membrane. This Homo sapiens (Human) protein is Transmembrane protein CCDC163.